Reading from the N-terminus, the 362-residue chain is MVSPIEVRLQMTYPEFTVSTDLALPGAGITALFGPSGSGKTTCLRCIAGLEKAEQGFIRVHDEVWQDSENGVFLAPHKRAIGYVFQEASLFDHLSVRANLEFGLKRIPRPQRRIELQQATELLGIDHLLERRPDKLSGGERQRVGIARALLTSPRLMLLDEPLAALDTKRKGEILPYLERLHRELDIPMLYVSHAQDEVARLADHLVLLEAGKVLASGPIRETLARLDLPLAMGDDAGVVIEGTVSAYDRHYQLLTVTLPGSNLCMRVAHAELQIGTLLRVKVQARDVSLNLQSDDHSSILNRLPVTVLEEALADNLAHVLVKLNAGGTPLLARITRYSSDQLNLHRGQTLWAQIKAVAVLA.

One can recognise an ABC transporter domain in the interval Val2–Asp236. An ATP-binding site is contributed by Gly34–Thr41. One can recognise a Mop domain in the interval His297–Ala362.

Belongs to the ABC transporter superfamily. Molybdate importer (TC 3.A.1.8) family. As to quaternary structure, the complex is composed of two ATP-binding proteins (ModC), two transmembrane proteins (ModB) and a solute-binding protein (ModA).

It is found in the cell inner membrane. The catalysed reaction is molybdate(out) + ATP + H2O = molybdate(in) + ADP + phosphate + H(+). Its function is as follows. Part of the ABC transporter complex ModABC involved in molybdenum import. Responsible for energy coupling to the transport system. This chain is Molybdenum import ATP-binding protein ModC, found in Pseudomonas syringae pv. tomato (strain ATCC BAA-871 / DC3000).